A 192-amino-acid chain; its full sequence is MELLKDKIKKEGRVTEDNILMVDSFLNHQMDVEFFNEVGKEFKDRFKNDQIDKILTIESTGIGLGIITAQYFDNVPVVFGKKIERLPRNKREEVFNSEVYSFTKKTIYNVVVDKKFIKPGEKILIVDDFLANACAVFGLIDVVKQAGAEVVGVGIVIEKGFQSGRAHLEDKGIRVESLVTIDKIEDGEVYFK.

Xanthine is bound by residues leucine 20 and asparagine 27. 131–135 (ANACA) is a binding site for 5-phospho-alpha-D-ribose 1-diphosphate. Lysine 159 lines the xanthine pocket.

The protein belongs to the purine/pyrimidine phosphoribosyltransferase family. Xpt subfamily. Homodimer.

Its subcellular location is the cytoplasm. It catalyses the reaction XMP + diphosphate = xanthine + 5-phospho-alpha-D-ribose 1-diphosphate. Its pathway is purine metabolism; XMP biosynthesis via salvage pathway; XMP from xanthine: step 1/1. Its function is as follows. Converts the preformed base xanthine, a product of nucleic acid breakdown, to xanthosine 5'-monophosphate (XMP), so it can be reused for RNA or DNA synthesis. The sequence is that of Xanthine phosphoribosyltransferase 2 from Clostridium perfringens (strain ATCC 13124 / DSM 756 / JCM 1290 / NCIMB 6125 / NCTC 8237 / Type A).